Here is a 697-residue protein sequence, read N- to C-terminus: Serotransferrin (697 aa).

The N-terminal stretch at 1–19 is a signal peptide; the sequence is MRLTVGALLACAALGLCLA. 2 Transferrin-like domains span residues 25-347 and 360-682; these read VKWC…NQQE and VKWC…NMRK. 2 disulfide bridges follow: cysteine 28-cysteine 67 and cysteine 38-cysteine 58. Arginine 42 bears the Dimethylated arginine mark. Residues aspartate 82 and tyrosine 114 each coordinate Fe(3+). Disulfide bonds link cysteine 137–cysteine 213, cysteine 156–cysteine 350, cysteine 177–cysteine 193, cysteine 180–cysteine 196, cysteine 190–cysteine 198, cysteine 246–cysteine 260, cysteine 363–cysteine 395, and cysteine 373–cysteine 386. Threonine 139, arginine 143, alanine 145, and glycine 146 together coordinate hydrogencarbonate. Tyrosine 207 is a Fe(3+) binding site. Histidine 268 serves as a coordination point for Fe(3+). A Phosphoserine modification is found at serine 388. 2 residues coordinate Fe(3+): aspartate 410 and tyrosine 448. 8 disulfide bridges follow: cysteine 420-cysteine 692, cysteine 435-cysteine 655, cysteine 472-cysteine 543, cysteine 496-cysteine 683, cysteine 506-cysteine 520, cysteine 517-cysteine 526, cysteine 583-cysteine 597, and cysteine 633-cysteine 638. 4 residues coordinate hydrogencarbonate: threonine 474, arginine 478, alanine 480, and glycine 481. An N-linked (GlcNAc...) asparagine glycan is attached at asparagine 513. Tyrosine 537 lines the Fe(3+) pocket. Residue histidine 605 participates in Fe(3+) binding. Residue serine 684 is modified to Phosphoserine.

This sequence belongs to the transferrin family. Monomer. Part of a complex composed of SLC40A1/ferroportin, TF/transferrin and HEPH/hephaestin that transfers iron from cells to transferrin. In terms of tissue distribution, expressed by the liver and secreted in plasma.

The protein localises to the secreted. Transferrins are iron binding transport proteins which can bind two Fe(3+) ions in association with the binding of an anion, usually bicarbonate. It is responsible for the transport of iron from sites of absorption and heme degradation to those of storage and utilization. Serum transferrin may also have a further role in stimulating cell proliferation. The polypeptide is Serotransferrin (Tf) (Mus musculus (Mouse)).